Reading from the N-terminus, the 620-residue chain is Chaperone protein DnaK (620 aa).

Position 197 is a phosphothreonine; by autocatalysis (threonine 197). The interval 597 to 620 (AMANKNNAEQPKKKDDDVIDAEVE) is disordered.

The protein belongs to the heat shock protein 70 family.

Functionally, acts as a chaperone. This is Chaperone protein DnaK from Helicobacter acinonychis (strain Sheeba).